Consider the following 302-residue polypeptide: Sulfate adenylyltransferase subunit 2 (302 aa).

Belongs to the PAPS reductase family. CysD subfamily. As to quaternary structure, heterodimer composed of CysD, the smaller subunit, and CysN.

The enzyme catalyses sulfate + ATP + H(+) = adenosine 5'-phosphosulfate + diphosphate. Its pathway is sulfur metabolism; hydrogen sulfide biosynthesis; sulfite from sulfate: step 1/3. Functionally, with CysN forms the ATP sulfurylase (ATPS) that catalyzes the adenylation of sulfate producing adenosine 5'-phosphosulfate (APS) and diphosphate, the first enzymatic step in sulfur assimilation pathway. APS synthesis involves the formation of a high-energy phosphoric-sulfuric acid anhydride bond driven by GTP hydrolysis by CysN coupled to ATP hydrolysis by CysD. This chain is Sulfate adenylyltransferase subunit 2, found in Baumannia cicadellinicola subsp. Homalodisca coagulata.